A 288-amino-acid polypeptide reads, in one-letter code: Thymidylate synthase (288 aa).

Residues Arg21 and Arg150–Arg151 contribute to the dUMP site. The Nucleophile role is filled by Cys170. Residues Arg191–Asp194, Asn202, and His232–Tyr234 contribute to the dUMP site. Position 194 (Asp194) interacts with (6R)-5,10-methylene-5,6,7,8-tetrahydrofolate. Ala287 contributes to the (6R)-5,10-methylene-5,6,7,8-tetrahydrofolate binding site.

This sequence belongs to the thymidylate synthase family. Bacterial-type ThyA subfamily. In terms of assembly, homodimer.

Its subcellular location is the cytoplasm. The enzyme catalyses dUMP + (6R)-5,10-methylene-5,6,7,8-tetrahydrofolate = 7,8-dihydrofolate + dTMP. It functions in the pathway pyrimidine metabolism; dTTP biosynthesis. In terms of biological role, catalyzes the reductive methylation of 2'-deoxyuridine-5'-monophosphate (dUMP) to 2'-deoxythymidine-5'-monophosphate (dTMP) while utilizing 5,10-methylenetetrahydrofolate (mTHF) as the methyl donor and reductant in the reaction, yielding dihydrofolate (DHF) as a by-product. This enzymatic reaction provides an intracellular de novo source of dTMP, an essential precursor for DNA biosynthesis. The polypeptide is Thymidylate synthase (Mesoplasma florum (strain ATCC 33453 / NBRC 100688 / NCTC 11704 / L1) (Acholeplasma florum)).